We begin with the raw amino-acid sequence, 619 residues long: 1-deoxy-D-xylulose-5-phosphate synthase (619 aa).

Residues H80 and 121–123 (GHS) each bind thiamine diphosphate. Position 152 (D152) interacts with Mg(2+). Thiamine diphosphate-binding positions include 153–154 (GA), N181, Y288, and E370. N181 provides a ligand contact to Mg(2+).

Belongs to the transketolase family. DXPS subfamily. In terms of assembly, homodimer. Mg(2+) is required as a cofactor. It depends on thiamine diphosphate as a cofactor.

It catalyses the reaction D-glyceraldehyde 3-phosphate + pyruvate + H(+) = 1-deoxy-D-xylulose 5-phosphate + CO2. It functions in the pathway metabolic intermediate biosynthesis; 1-deoxy-D-xylulose 5-phosphate biosynthesis; 1-deoxy-D-xylulose 5-phosphate from D-glyceraldehyde 3-phosphate and pyruvate: step 1/1. In terms of biological role, catalyzes the acyloin condensation reaction between C atoms 2 and 3 of pyruvate and glyceraldehyde 3-phosphate to yield 1-deoxy-D-xylulose-5-phosphate (DXP). The sequence is that of 1-deoxy-D-xylulose-5-phosphate synthase from Yersinia pestis (strain Pestoides F).